We begin with the raw amino-acid sequence, 281 residues long: Bifunctional protein FolD (281 aa).

NADP(+) is bound by residues 165–167 (GRG), Thr192, and Val233.

This sequence belongs to the tetrahydrofolate dehydrogenase/cyclohydrolase family. In terms of assembly, homodimer.

It catalyses the reaction (6R)-5,10-methylene-5,6,7,8-tetrahydrofolate + NADP(+) = (6R)-5,10-methenyltetrahydrofolate + NADPH. The catalysed reaction is (6R)-5,10-methenyltetrahydrofolate + H2O = (6R)-10-formyltetrahydrofolate + H(+). It participates in one-carbon metabolism; tetrahydrofolate interconversion. In terms of biological role, catalyzes the oxidation of 5,10-methylenetetrahydrofolate to 5,10-methenyltetrahydrofolate and then the hydrolysis of 5,10-methenyltetrahydrofolate to 10-formyltetrahydrofolate. This Corynebacterium diphtheriae (strain ATCC 700971 / NCTC 13129 / Biotype gravis) protein is Bifunctional protein FolD.